The following is a 502-amino-acid chain: DnaJ homolog subfamily C member 3 homolog (502 aa).

An N-terminal signal peptide occupies residues 1–25 (MIVNKKYFLLICIIILISINCLVLA). TPR repeat units lie at residues 29-62 (IENF…IGSD), 69-102 (VSLL…NPDN), 103-136 (IHAR…RPDN), 184-217 (KEVR…EPSS), 218-251 (VAAL…DPDN), 264-297 (FEKS…EPNS), 302-335 (TPLY…DELN), and 336-369 (ADAL…KPND). N-linked (GlcNAc...) asparagine glycosylation is present at asparagine 51. An intrachain disulfide couples cysteine 309 to cysteine 325. One can recognise a J domain in the interval 390–457 (DYYKILGIQK…EKRKRYDMGE (68 aa)).

It is found in the secreted. The protein resides in the endoplasmic reticulum lumen. Its function is as follows. May be involved in the unfolded protein response (UPR) during ER stress. This chain is DnaJ homolog subfamily C member 3 homolog (dnajc3), found in Dictyostelium discoideum (Social amoeba).